A 526-amino-acid polypeptide reads, in one-letter code: Peptide chain release factor 3 (526 aa).

In terms of domain architecture, tr-type G spans 9–277 (NKRRTFAIIS…DFVEYAPGPQ (269 aa)). GTP-binding positions include 18–25 (SHPDAGKT), 86–90 (DTPGH), and 140–143 (NKLD).

This sequence belongs to the TRAFAC class translation factor GTPase superfamily. Classic translation factor GTPase family. PrfC subfamily.

Its subcellular location is the cytoplasm. Increases the formation of ribosomal termination complexes and stimulates activities of RF-1 and RF-2. It binds guanine nucleotides and has strong preference for UGA stop codons. It may interact directly with the ribosome. The stimulation of RF-1 and RF-2 is significantly reduced by GTP and GDP, but not by GMP. This chain is Peptide chain release factor 3, found in Legionella pneumophila (strain Corby).